Consider the following 750-residue polypeptide: Olfactomedin-like protein 2B (750 aa).

The signal sequence occupies residues 1-22 (MAKPRLLVLYFALIVVPAWVSS). Coiled-coil stretches lie at residues 40-68 (AEDE…KVKA) and 179-213 (KLEE…GKEN). N-linked (GlcNAc...) asparagine glycosylation is found at N187 and N213. Disordered regions lie at residues 346 to 437 (TRRP…PPAV) and 452 to 484 (VPPT…PEEE). 2 stretches are compositionally biased toward polar residues: residues 354-384 (QGHS…SDPS) and 393-413 (PTLQ…LQPS). Positions 416 to 430 (VPATTVAHTATQQPA) are enriched in low complexity. The Olfactomedin-like domain maps to 493 to 750 (RCKDTLSTIT…QVTYHVIFAY (258 aa)). An intrachain disulfide couples C494 to C680. N695 is a glycosylation site (N-linked (GlcNAc...) asparagine).

Homodimer. Binds to heparin and chondroitin sulfate E. O-glycosylated and N-glycosylated.

The protein resides in the secreted. This Homo sapiens (Human) protein is Olfactomedin-like protein 2B (OLFML2B).